Here is a 170-residue protein sequence, read N- to C-terminus: Ureidoglycolate lyase 1 (170 aa).

The protein belongs to the ureidoglycolate lyase family. As to quaternary structure, homodimer. The cofactor is Ni(2+).

The catalysed reaction is (S)-ureidoglycolate = urea + glyoxylate. Its pathway is nitrogen metabolism; (S)-allantoin degradation. Functionally, catalyzes the catabolism of the allantoin degradation intermediate (S)-ureidoglycolate, generating urea and glyoxylate. Involved in the utilization of allantoin as nitrogen source. The chain is Ureidoglycolate lyase 1 from Rhizobium meliloti (strain 1021) (Ensifer meliloti).